Consider the following 856-residue polypeptide: V-type proton ATPase 116 kDa subunit a 2 (856 aa).

Over 1–393 the chain is Cytoplasmic; it reads MGSLFRSETM…DAYGVGSYRE (393 aa). The helical transmembrane segment at 394 to 412 threads the bilayer; that stretch reads VNPALFTIITFPFLFAVMF. Topologically, residues 413-414 are vacuolar; it reads GD. Residues 415 to 431 form a helical membrane-spanning segment; sequence FGHGFVMFLFALLLVLN. At 432-445 the chain is on the cytoplasmic side; it reads ENHPRLNQSQEIMR. The chain crosses the membrane as a helical span at residues 446–475; that stretch reads MFFNGRYILLLMGLFSVYTGLIYNDCFSKS. Residues 476-549 are Vacuolar-facing; sequence VNLFGSGWNV…ATNRLTFLNS (74 aa). Asn484 and Asn505 each carry an N-linked (GlcNAc...) asparagine glycan. Residues 550–569 traverse the membrane as a helical segment; it reads FKMKMSVILGIIHMTFGVIL. The Cytoplasmic segment spans residues 570–587; it reads GIFNHLHFRKKFNIYLVS. A helical membrane pass occupies residues 588–608; it reads IPELLFMLCIFGYLIFMIFYK. Over 609–651 the chain is Vacuolar; the sequence is WLVFSAETSRVAPSILIEFINMFLFPASKTSGLYTGQEYVQRV. Residues 652–671 traverse the membrane as a helical segment; it reads LLVVTALSVPVLFLGKPLFL. Over 672 to 739 the chain is Cytoplasmic; the sequence is LWLHNGRSCF…EILMTQVIHS (68 aa). 2 positions are modified to phosphoserine: Ser695 and Ser700. A helical membrane pass occupies residues 740–764; that stretch reads IEYCLGCISNTASYLRLWALSLAHA. The Vacuolar portion of the chain corresponds to 765-785; it reads QLSDVLWAMLMRVGLRVDTTY. A helical transmembrane segment spans residues 786–824; that stretch reads GVLLLLPVIALFAVLTIFILLIMEGLSAFLHAIRLHWVE. Topologically, residues 825 to 856 are cytoplasmic; it reads FQNKFYVGAGTKFVPFSFSLLSSKFNNDDSVA.

This sequence belongs to the V-ATPase 116 kDa subunit family. As to quaternary structure, V-ATPase is a heteromultimeric enzyme made up of two complexes: the ATP-hydrolytic V1 complex and the proton translocation V0 complex. The V1 complex consists of three catalytic AB heterodimers that form a heterohexamer, three peripheral stalks each consisting of EG heterodimers, one central rotor including subunits D and F, and the regulatory subunits C and H. The proton translocation complex V0 consists of the proton transport subunit a, a ring of proteolipid subunits c9c'', rotary subunit d, subunits e and f, and the accessory subunits ATP6AP1/Ac45 and ATP6AP2/PRR. Directly interacts with PSCD2 through its N-terminal cytosolic tail in an intra-endosomal acidification-dependent manner. Disruption of this interaction results in the inhibition of endocytosis. Interacts with SPAAR.

It localises to the cell membrane. The protein resides in the endosome membrane. Subunit of the V0 complex of vacuolar(H+)-ATPase (V-ATPase), a multisubunit enzyme composed of a peripheral complex (V1) that hydrolyzes ATP and a membrane integral complex (V0) that translocates protons. V-ATPase is responsible for acidifying and maintaining the pH of intracellular compartments and in some cell types, is targeted to the plasma membrane, where it is responsible for acidifying the extracellular environment. Essential component of the endosomal pH-sensing machinery. May play a role in maintaining the Golgi functions, such as glycosylation maturation, by controlling the Golgi pH. In aerobic conditions, involved in intracellular iron homeostasis, thus triggering the activity of Fe(2+) prolyl hydroxylase (PHD) enzymes, and leading to HIF1A hydroxylation and subsequent proteasomal degradation. The sequence is that of V-type proton ATPase 116 kDa subunit a 2 (ATP6V0A2) from Homo sapiens (Human).